Consider the following 138-residue polypeptide: Sec-independent protein translocase protein TatB (138 aa).

The chain crosses the membrane as a helical span at residues 2 to 18 (SFGEIIVILVVAILVLG). The disordered stretch occupies residues 109 to 138 (NNLSGQNLNTEEKPNLSKLETQDKNGKINV). Positions 118 to 138 (TEEKPNLSKLETQDKNGKINV) are enriched in basic and acidic residues.

The protein belongs to the TatB family. The Tat system comprises two distinct complexes: a TatABC complex, containing multiple copies of TatA, TatB and TatC subunits, and a separate TatA complex, containing only TatA subunits. Substrates initially bind to the TatABC complex, which probably triggers association of the separate TatA complex to form the active translocon.

It localises to the cell inner membrane. Its function is as follows. Part of the twin-arginine translocation (Tat) system that transports large folded proteins containing a characteristic twin-arginine motif in their signal peptide across membranes. Together with TatC, TatB is part of a receptor directly interacting with Tat signal peptides. TatB may form an oligomeric binding site that transiently accommodates folded Tat precursor proteins before their translocation. This is Sec-independent protein translocase protein TatB from Campylobacter jejuni subsp. jejuni serotype O:2 (strain ATCC 700819 / NCTC 11168).